The following is a 501-amino-acid chain: Chromosomal replication initiator protein DnaA (501 aa).

The domain I, interacts with DnaA modulators stretch occupies residues 1-90 (MSVELWQQCV…KRSSAPRAAP (90 aa)). Residues 91 to 164 (NAPLAAAASQ…QVEGALKHTS (74 aa)) form a domain II region. A compositionally biased stretch (low complexity) spans 103 to 121 (AAPVASTPAPAPSKSSAKK). A disordered region spans residues 103 to 150 (AAPVASTPAPAPSKSSAKKNAAENEEPSRDSFDPMAGASSQQAPIRAE). Basic and acidic residues predominate over residues 122 to 134 (NAAENEEPSRDSF). Residues 165–381 (YLNRTFTFEN…GALKRVIAHS (217 aa)) form a domain III, AAA+ region region. ATP contacts are provided by Gly209, Gly211, Lys212, and Thr213. Residues 382 to 501 (HFMGRDITIE…YKNLLRTLTT (120 aa)) form a domain IV, binds dsDNA region.

Belongs to the DnaA family. In terms of assembly, oligomerizes as a right-handed, spiral filament on DNA at oriC.

The protein localises to the cytoplasm. Plays an essential role in the initiation and regulation of chromosomal replication. ATP-DnaA binds to the origin of replication (oriC) to initiate formation of the DNA replication initiation complex once per cell cycle. Binds the DnaA box (a 9 base pair repeat at the origin) and separates the double-stranded (ds)DNA. Forms a right-handed helical filament on oriC DNA; dsDNA binds to the exterior of the filament while single-stranded (ss)DNA is stabiized in the filament's interior. The ATP-DnaA-oriC complex binds and stabilizes one strand of the AT-rich DNA unwinding element (DUE), permitting loading of DNA polymerase. After initiation quickly degrades to an ADP-DnaA complex that is not apt for DNA replication. Binds acidic phospholipids. In Pseudomonas fluorescens (strain SBW25), this protein is Chromosomal replication initiator protein DnaA.